Reading from the N-terminus, the 238-residue chain is tRNA (guanine-N(1)-)-methyltransferase (238 aa).

S-adenosyl-L-methionine-binding positions include glycine 110 and 129–134; that span reads LGDFIL.

This sequence belongs to the RNA methyltransferase TrmD family. Homodimer.

Its subcellular location is the cytoplasm. The enzyme catalyses guanosine(37) in tRNA + S-adenosyl-L-methionine = N(1)-methylguanosine(37) in tRNA + S-adenosyl-L-homocysteine + H(+). In terms of biological role, specifically methylates guanosine-37 in various tRNAs. The sequence is that of tRNA (guanine-N(1)-)-methyltransferase from Clostridium botulinum (strain Alaska E43 / Type E3).